The following is a 207-amino-acid chain: LexA repressor (207 aa).

The segment at residues 28–48 (VREIGEAVGLASSSTVHGHLS) is a DNA-binding region (H-T-H motif). Catalysis depends on for autocatalytic cleavage activity residues serine 130 and lysine 168.

The protein belongs to the peptidase S24 family. As to quaternary structure, homodimer.

It carries out the reaction Hydrolysis of Ala-|-Gly bond in repressor LexA.. Represses a number of genes involved in the response to DNA damage (SOS response), including recA and lexA. In the presence of single-stranded DNA, RecA interacts with LexA causing an autocatalytic cleavage which disrupts the DNA-binding part of LexA, leading to derepression of the SOS regulon and eventually DNA repair. The protein is LexA repressor of Staphylococcus carnosus (strain TM300).